We begin with the raw amino-acid sequence, 303 residues long: MALRALHAQPTGGPQLRFLLFLLLLLLLLSWPSQGDALALPEQRRSLSESQLNPDELRGRFQDLLSRLHANQSREDSNSEPTPDPAVRILSPEVRLGSHGRLLLRVNRASLTQGLPEAYRVHRALLLLTPSSRPWDITRPLQRAISLQGPHARALRLRLAPPPDLAVLPSGGARLELHLRSAAGRGRRSAHLHPRDSCPLGPGRCCHLETVQATLEDLGWSDWVLSPRQLQLSMCVGECPHLYRSANTHALIKARLHGLQPDRVPAPCCVPSSYTPVVLMHRTDSGVSLQTYDDLVAQGCHCA.

The N-terminal stretch at 1 to 30 is a signal peptide; sequence MALRALHAQPTGGPQLRFLLFLLLLLLLLS. A propeptide spanning residues 31 to 188 is cleaved from the precursor; it reads WPSQGDALAL…LRSAAGRGRR (158 aa). The N-linked (GlcNAc...) asparagine glycan is linked to N71. 4 cysteine pairs are disulfide-bonded: C198-C205, C206-C269, C235-C300, and C239-C302.

Belongs to the TGF-beta family. In terms of assembly, homodimer; disulfide-linked. Interacts with GFRAL and RET; ligand of GFRAL, which mediates GDF15 internalization and cellular signaling through interaction with RET via the formation of a 2:2:2 ternary complex composed of GDF15, GFRAL and RET. As to expression, detected in plasma (at protein level).

It is found in the secreted. In terms of biological role, hormone produced in response to various stresses to confer information about those stresses to the brain, and trigger an aversive response, characterized by nausea and/or loss of appetite. The aversive response is both required to reduce continuing exposure to those stresses at the time of exposure and to promote avoidance behavior in the future. Acts by binding to its receptor, GFRAL, activating GFRAL-expressing neurons localized in the area postrema and nucleus tractus solitarius of the brainstem. It then triggers the activation of neurons localized within the parabrachial nucleus and central amygdala, which constitutes part of the 'emergency circuit' that shapes responses to stressful conditions. The GDF15-GFRAL signal induces expression of genes involved in metabolism, such as lipid metabolism in adipose tissues. Contributes to the effect of metformin, an anti-diabetic drug, on appetite reduction and weight loss: produced in the kidney in response to metformin treatment, thereby activating the GDF15-GFRAL response, leading to reduced appetite and weight. Required for avoidance behavior in response to food allergens: induced downstream of mast cell activation to promote aversion and minimize harmful effects of exposure to noxious substances. Produced in response to anticancer drugs, such as camptothecin or cisplatin, promoting nausea and contributing to malnutrition. Overproduced in many cancers, promoting anorexia in cancer (cachexia). Responsible for the risk of nausea during pregnancy: high levels of GDF15 during pregnancy, mostly originating from embryos, are associated with increased nausea. Maternal sensitivity to nausea is probably determined by pre-pregnancy exposure to GDF15, females with naturally high level of GDF15 being less susceptible to nausea than female rats with low levels of GDF15 before pregnancy. Promotes metabolic adaptation in response to systemic inflammation caused by bacterial and viral infections in order to promote tissue tolerance and prevent tissue damage. Required for tissue tolerance in response to myocardial infarction by acting as an inhibitor of leukocyte integring activation, thereby protecting against cardiac rupture. Inhibits growth hormone signaling on hepatocytes. This Rattus norvegicus (Rat) protein is Growth/differentiation factor 15.